Here is a 505-residue protein sequence, read N- to C-terminus: Glycerol kinase (505 aa).

Threonine 13 contributes to the ADP binding site. Residues threonine 13, threonine 14, and serine 15 each coordinate ATP. Threonine 13 lines the sn-glycerol 3-phosphate pocket. Arginine 17 contributes to the ADP binding site. Residues arginine 83, glutamate 84, tyrosine 135, and aspartate 247 each contribute to the sn-glycerol 3-phosphate site. 5 residues coordinate glycerol: arginine 83, glutamate 84, tyrosine 135, aspartate 247, and glutamine 248. ADP contacts are provided by threonine 269 and glycine 313. Residues threonine 269, glycine 313, glutamine 317, and glycine 414 each coordinate ATP. Residues glycine 414 and asparagine 418 each contribute to the ADP site.

The protein belongs to the FGGY kinase family.

The catalysed reaction is glycerol + ATP = sn-glycerol 3-phosphate + ADP + H(+). It participates in polyol metabolism; glycerol degradation via glycerol kinase pathway; sn-glycerol 3-phosphate from glycerol: step 1/1. With respect to regulation, inhibited by fructose 1,6-bisphosphate (FBP). In terms of biological role, key enzyme in the regulation of glycerol uptake and metabolism. Catalyzes the phosphorylation of glycerol to yield sn-glycerol 3-phosphate. This Clavibacter michiganensis subsp. michiganensis (strain NCPPB 382) protein is Glycerol kinase.